A 473-amino-acid polypeptide reads, in one-letter code: Photosystem II CP43 reaction center protein (473 aa).

Positions 1–14 (MKTLYSLRRFYHVE) are excised as a propeptide. T15 carries the post-translational modification N-acetylthreonine. Phosphothreonine is present on T15. The next 5 membrane-spanning stretches (helical) occupy residues 69 to 93 (LFEV…PHLA), 134 to 155 (LLGP…KDRN), 178 to 200 (KALY…RKIT), 255 to 275 (KPFA…LSYS), and 291 to 312 (WFNN…ASQA). [CaMn4O5] cluster is bound at residue E367. A helical membrane pass occupies residues 447 to 471 (RARAAAAGFEKGIDRDFEPVLSMTP).

It belongs to the PsbB/PsbC family. PsbC subfamily. In terms of assembly, PSII is composed of 1 copy each of membrane proteins PsbA, PsbB, PsbC, PsbD, PsbE, PsbF, PsbH, PsbI, PsbJ, PsbK, PsbL, PsbM, PsbT, PsbX, PsbY, PsbZ, Psb30/Ycf12, at least 3 peripheral proteins of the oxygen-evolving complex and a large number of cofactors. It forms dimeric complexes. Binds multiple chlorophylls and provides some of the ligands for the Ca-4Mn-5O cluster of the oxygen-evolving complex. It may also provide a ligand for a Cl- that is required for oxygen evolution. PSII binds additional chlorophylls, carotenoids and specific lipids. serves as cofactor.

The protein localises to the plastid. It localises to the chloroplast thylakoid membrane. Functionally, one of the components of the core complex of photosystem II (PSII). It binds chlorophyll and helps catalyze the primary light-induced photochemical processes of PSII. PSII is a light-driven water:plastoquinone oxidoreductase, using light energy to abstract electrons from H(2)O, generating O(2) and a proton gradient subsequently used for ATP formation. This is Photosystem II CP43 reaction center protein from Arabis hirsuta (Hairy rock-cress).